The sequence spans 476 residues: Aspartyl/glutamyl-tRNA(Asn/Gln) amidotransferase subunit B (476 aa).

It belongs to the GatB/GatE family. GatB subfamily. Heterotrimer of A, B and C subunits.

It carries out the reaction L-glutamyl-tRNA(Gln) + L-glutamine + ATP + H2O = L-glutaminyl-tRNA(Gln) + L-glutamate + ADP + phosphate + H(+). The enzyme catalyses L-aspartyl-tRNA(Asn) + L-glutamine + ATP + H2O = L-asparaginyl-tRNA(Asn) + L-glutamate + ADP + phosphate + 2 H(+). Allows the formation of correctly charged Asn-tRNA(Asn) or Gln-tRNA(Gln) through the transamidation of misacylated Asp-tRNA(Asn) or Glu-tRNA(Gln) in organisms which lack either or both of asparaginyl-tRNA or glutaminyl-tRNA synthetases. The reaction takes place in the presence of glutamine and ATP through an activated phospho-Asp-tRNA(Asn) or phospho-Glu-tRNA(Gln). This is Aspartyl/glutamyl-tRNA(Asn/Gln) amidotransferase subunit B from Lactobacillus delbrueckii subsp. bulgaricus (strain ATCC 11842 / DSM 20081 / BCRC 10696 / JCM 1002 / NBRC 13953 / NCIMB 11778 / NCTC 12712 / WDCM 00102 / Lb 14).